The sequence spans 464 residues: Argininosuccinate lyase (464 aa).

This sequence belongs to the lyase 1 family. Argininosuccinate lyase subfamily.

The protein resides in the cytoplasm. The catalysed reaction is 2-(N(omega)-L-arginino)succinate = fumarate + L-arginine. It functions in the pathway amino-acid biosynthesis; L-arginine biosynthesis; L-arginine from L-ornithine and carbamoyl phosphate: step 3/3. This Pseudomonas aeruginosa (strain ATCC 15692 / DSM 22644 / CIP 104116 / JCM 14847 / LMG 12228 / 1C / PRS 101 / PAO1) protein is Argininosuccinate lyase.